A 367-amino-acid chain; its full sequence is Lipoyl synthase 2, chloroplastic (367 aa).

Residues Cys84, Cys89, Cys95, Cys121, Cys125, Cys128, and Ser336 each contribute to the [4Fe-4S] cluster site. Positions 104–325 constitute a Radical SAM core domain; it reads GEGDGIATAT…KEYGESVGFR (222 aa).

The protein belongs to the radical SAM superfamily. Lipoyl synthase family. [4Fe-4S] cluster serves as cofactor.

The protein resides in the plastid. The protein localises to the chloroplast. The catalysed reaction is [[Fe-S] cluster scaffold protein carrying a second [4Fe-4S](2+) cluster] + N(6)-octanoyl-L-lysyl-[protein] + 2 oxidized [2Fe-2S]-[ferredoxin] + 2 S-adenosyl-L-methionine + 4 H(+) = [[Fe-S] cluster scaffold protein] + N(6)-[(R)-dihydrolipoyl]-L-lysyl-[protein] + 4 Fe(3+) + 2 hydrogen sulfide + 2 5'-deoxyadenosine + 2 L-methionine + 2 reduced [2Fe-2S]-[ferredoxin]. Its pathway is protein modification; protein lipoylation via endogenous pathway; protein N(6)-(lipoyl)lysine from octanoyl-[acyl-carrier-protein]: step 2/2. Its function is as follows. Catalyzes the radical-mediated insertion of two sulfur atoms into the C-6 and C-8 positions of the octanoyl moiety bound to the lipoyl domains of lipoate-dependent enzymes, thereby converting the octanoylated domains into lipoylated derivatives. The chain is Lipoyl synthase 2, chloroplastic from Zea mays (Maize).